The sequence spans 850 residues: MYLYIETLKQRLDAINQLRVDRALAAMGPAFQKVYSLLPILLHCHHPQMPGYLDGNVPHGVCLFTPNEIQQDYLADVEARWGEPLAPSAGGELPITGVYSMGSTSSIGQCHTSDLDIWVCHQAWLDTEERNQLQQKCSLLEKWAASMGVEVSFFLVDENRFRHNASGSLGGEDCGSTQHILLLDEFYRSAVRLAGKRILWNMVPVKEEEHYDDYVLSLYAQGVLTPNEWLDLGGLSTLSAEEYFGASLWQLYKSIDSPYKAVLKTLLLEAYSWEYPNSQLLAMEIKQHLHAGEIVSFGLDAYCMMLDRVTRYLIQINDTTRLNLVRRCFYLKVCEKLSRTPASTGWRREVLSQLVSEWGWSNEKLAVLDNRANWKIERVREAHNELLDAMMQSYRNLIRFARRNNLSVSASPQDIGVLTRKLYAAFEALPGKVTLVNPQISPDLSEEHLTFIHVPAGRANRPGWYLYNQAPSMDAIVSHQPLEYNRYLNKLVSWAYFNGLLTSKTHLHIKSANLCDTVKLQELVTDISHHFPLRLAAPTPKALYSPCEIRHLAIIVNLEHDPTTTFRNQVVHFDFRKLDVFSFGEQQQCLVGSIDLLYRNSWNEVRTLHFSGEQAVLEALKTILGKMHQDAAPPESVDVFCYSQHLRGLIRTRIQQLVSECIDLRLSSTRQEPGRFKAVRVSGQTWGLFFERLSVSVQKLENAVEFYGAISNNKLHGLSVQVETNQIHLPPVVDGFASEGIIQFFFEGTADEKGFNIYILDEANRVEVYHHCEGSKEELVRDVSRFYSSSHDRFTYGSSFINFNLPQFYQIVQLDGRTQVIPFRSNTLSQLCANIAEKEASLPTKQCQLH.

Positions 1 to 535 (MYLYIETLKQ…DISHHFPLRL (535 aa)) are catalytic. A regulatory region spans residues 541-850 (KALYSPCEIR…SLPTKQCQLH (310 aa)).

It belongs to the adenylyl cyclase class-1 family.

The protein localises to the cytoplasm. The catalysed reaction is ATP = 3',5'-cyclic AMP + diphosphate. The regulatory domain is involved in the regulation of cyclase activity by the carbon source. This chain is Adenylate cyclase (cya), found in Yersinia pestis.